A 294-amino-acid chain; its full sequence is Nucleotide-binding protein Daud_0300 (294 aa).

11 to 18 (GLSGAGKT) provides a ligand contact to ATP. 62 to 65 (DIRG) is a binding site for GTP.

This sequence belongs to the RapZ-like family.

Functionally, displays ATPase and GTPase activities. This chain is Nucleotide-binding protein Daud_0300, found in Desulforudis audaxviator (strain MP104C).